A 358-amino-acid polypeptide reads, in one-letter code: Nitric oxide synthase oxygenase (358 aa).

Position 62 (C62) interacts with heme.

It belongs to the NOS family. Bacterial NOS oxygenase subfamily. As to quaternary structure, homodimer. Heme is required as a cofactor. (6S)-5,6,7,8-tetrahydrofolate serves as cofactor.

It carries out the reaction 3 reduced [flavodoxin] + 2 L-arginine + 4 O2 = 3 oxidized [flavodoxin] + 2 L-citrulline + 2 nitric oxide + 4 H2O + 5 H(+). In terms of biological role, catalyzes the production of nitric oxide. The sequence is that of Nitric oxide synthase oxygenase (nos) from Staphylococcus aureus (strain COL).